An 85-amino-acid polypeptide reads, in one-letter code: MNYLVMISLALLFMTGVESKKDGYIVDDKNCTFFCGRNAYCNDECKKKGAESGYCQWASPYGNACYCYKLPDRVSTKKKGGCNGR.

Positions 1-19 (MNYLVMISLALLFMTGVES) are cleaved as a signal peptide. Positions 21-83 (KDGYIVDDKN…VSTKKKGGCN (63 aa)) constitute an LCN-type CS-alpha/beta domain. 4 disulfides stabilise this stretch: Cys31–Cys82, Cys35–Cys55, Cys41–Cys65, and Cys45–Cys67. An Asparagine amide modification is found at Asn83.

Belongs to the long (4 C-C) scorpion toxin superfamily. Sodium channel inhibitor family. Alpha subfamily. Expressed by the venom gland.

The protein localises to the secreted. In terms of biological role, alpha toxins bind voltage-independently at site-3 of sodium channels (Nav) and inhibit the inactivation of the activated channels, thereby blocking neuronal transmission. The protein is Toxin AahP1005 of Androctonus australis (Sahara scorpion).